Consider the following 1134-residue polypeptide: MMKSSVKEILESLRLLDSSERSSSLPSPSTFRAPMPLIRQSLPAKFRNAISLESKTIEKEDKDWSTEQITQSAEKEKTGNEVVKISTAQMSRAKNSHDPEWINSAEYFVREKLCVWCRVAANGQWHLGKIHSTSSSDDVCVMLSANDDVRTMEEIFPANPEILEGVEDLTQLSYLNEPSLLYNLRVRYSQDLIYSKAGPVLIAVNPFKNVQIYGEEFLSAYQKNALDAPHVYAVADAAYDDMMREEKNQSIIISGESGAGKTETAKYAMQYLEALGGGSFGVENEILKTNCILEAFGNAKTSRNDNSSRFGKLMEIHFSAKGKICGAKLETFSLDQSRVAQLCNGERCYHIFYQLCAGASPILKERLKIKAASEYNYLNQSNCLTIDRTDDAQKFHKLMEAFNIVQIPQEYQERTFALLAAVLWLGNVSFEVIDNENHVEVVADEAVTNVAMLMGCNSKKLMVVLSTCKLQAGRDCIAKRLTLRQATDMRDSLAKIIYASLFNWLVEQINISLEVGNSRTGRSISILDIYGFESFKDNSFEQFCINYANERLQQHFNRHLFKLEQEEYEGDGIDWTKVEFIDNQECLNLIEKKPIGLVSLLNEESNFPKATDTTFANKLKQHLNANSCFKGERGRGFRIKHYAGEVLYNTNGFLEKNRDPLHVDLIQLLSLCKCQLLNLFSTKMHHDFLKPATFSDSMNQSVIAKFKGQLFKLMNKLEDTTPHFIRCIKPNSNQLPGLYEENHVLQQLRCCGVLEIVRISRSGYPTRLTHQELAVRYGCLLLDTRISQDPLSTSKAILKQCNLPPEMYQVGYTKIYLRTGVISVLEERKKYVLRGILGLQKQFRGYQTREYFHNMRNAAVILQSYIRGENARRNYIVVGESAIVSTAITKELDAAIHLQYMVRKWLARKLLNSTQQKNKPRNEKKKTRRKSTKRVSEDKELLSEQFEVQPCVLADLQSRVLKVEAAIMQKEDENTALQEELQRFEERWLENETRMKSMEDTWQKHMSSMQMSLAAACKVLAPDKTASHGTDSEDTMSFGTPTKELKGSLSDVNNLSTEFDQRSVIIHEDPKSLVEVKSDSISNRKQHAEELRRLKSRFEKWKKDYKTRLRETKARVRLNGDEGRHRNWWCKKSY.

The region spanning 110 to 160 (REKLCVWCRVAANGQWHLGKIHSTSSSDDVCVMLSANDDVRTMEEIFPANP) is the Myosin N-terminal SH3-like domain. One can recognise a Myosin motor domain in the interval 164-830 (EGVEDLTQLS…VISVLEERKK (667 aa)). ATP-binding positions include 255–262 (GESGAGKT) and 304–312 (NDNSSRFGK). Actin-binding regions lie at residues 589 to 623 (LIEK…KQHL) and 710 to 732 (LFKL…KPNS). 3 consecutive IQ domains span residues 832–861 (VLRG…AAVI), 855–884 (MRNA…SAIV), and 891–920 (ELDA…KNKP). A disordered region spans residues 913-939 (STQQKNKPRNEKKKTRRKSTKRVSEDK). A compositionally biased stretch (basic residues) spans 918 to 933 (NKPRNEKKKTRRKSTK). The stretch at 953 to 999 (LADLQSRVLKVEAAIMQKEDENTALQEELQRFEERWLENETRMKSME) forms a coiled coil.

The protein belongs to the TRAFAC class myosin-kinesin ATPase superfamily. Myosin family. Plant myosin class VIII subfamily. In terms of assembly, homodimer.

Myosin heavy chain that is required for the cell cycle-regulated transport of various organelles and proteins for their segregation. Functions by binding with its tail domain to receptor proteins on organelles and exerting force with its N-terminal motor domain against actin filaments, thereby transporting its cargo along polarized actin cables. This Arabidopsis thaliana (Mouse-ear cress) protein is Myosin-4 (VIII-B).